The chain runs to 97 residues: Serine protease inhibitor Kazal-type 13 (97 aa).

The signal sequence occupies residues 1–26 (MTRRGCWPHRIIFSLILLTWTHVTLA). The region spanning 36–97 (NWPKPPCKMY…IEFVKYGKCE (62 aa)) is the Kazal-like domain. 3 cysteine pairs are disulfide-bonded: C42-C78, C56-C75, and C64-C96.

As to expression, restricted to the epididymis, with highest levels in the initial segment, including epithelial cells, lumen, and sperm (at protein level). Localizes to the sperm heads, where it is restricted to the acrosomal region in epididymal spermatozoa, but not in testicular spermatozoa (at protein level).

It is found in the secreted. May be a serine protease inhibitor. Essential for sperm maturation and fertility. Inhibits sperm acrosome reaction, protecting sperm from premature reaction. The polypeptide is Serine protease inhibitor Kazal-type 13 (Spink13) (Rattus norvegicus (Rat)).